A 419-amino-acid polypeptide reads, in one-letter code: Serine hydroxymethyltransferase (419 aa).

(6S)-5,6,7,8-tetrahydrofolate is bound by residues Leu-121 and 125–127 (GHL). Residue Lys-230 is modified to N6-(pyridoxal phosphate)lysine. 355–357 (SPF) contributes to the (6S)-5,6,7,8-tetrahydrofolate binding site.

This sequence belongs to the SHMT family. In terms of assembly, homodimer. Pyridoxal 5'-phosphate serves as cofactor.

It is found in the cytoplasm. It carries out the reaction (6R)-5,10-methylene-5,6,7,8-tetrahydrofolate + glycine + H2O = (6S)-5,6,7,8-tetrahydrofolate + L-serine. It functions in the pathway one-carbon metabolism; tetrahydrofolate interconversion. The protein operates within amino-acid biosynthesis; glycine biosynthesis; glycine from L-serine: step 1/1. Functionally, catalyzes the reversible interconversion of serine and glycine with tetrahydrofolate (THF) serving as the one-carbon carrier. This reaction serves as the major source of one-carbon groups required for the biosynthesis of purines, thymidylate, methionine, and other important biomolecules. Also exhibits THF-independent aldolase activity toward beta-hydroxyamino acids, producing glycine and aldehydes, via a retro-aldol mechanism. This chain is Serine hydroxymethyltransferase, found in Streptococcus equi subsp. zooepidemicus (strain MGCS10565).